We begin with the raw amino-acid sequence, 179 residues long: Crossover junction endodeoxyribonuclease RuvC (179 aa).

Catalysis depends on residues D12, E72, and D144. The Mg(2+) site is built by D12, E72, and D144.

It belongs to the RuvC family. In terms of assembly, homodimer which binds Holliday junction (HJ) DNA. The HJ becomes 2-fold symmetrical on binding to RuvC with unstacked arms; it has a different conformation from HJ DNA in complex with RuvA. In the full resolvosome a probable DNA-RuvA(4)-RuvB(12)-RuvC(2) complex forms which resolves the HJ. Requires Mg(2+) as cofactor.

Its subcellular location is the cytoplasm. It carries out the reaction Endonucleolytic cleavage at a junction such as a reciprocal single-stranded crossover between two homologous DNA duplexes (Holliday junction).. The RuvA-RuvB-RuvC complex processes Holliday junction (HJ) DNA during genetic recombination and DNA repair. Endonuclease that resolves HJ intermediates. Cleaves cruciform DNA by making single-stranded nicks across the HJ at symmetrical positions within the homologous arms, yielding a 5'-phosphate and a 3'-hydroxyl group; requires a central core of homology in the junction. The consensus cleavage sequence is 5'-(A/T)TT(C/G)-3'. Cleavage occurs on the 3'-side of the TT dinucleotide at the point of strand exchange. HJ branch migration catalyzed by RuvA-RuvB allows RuvC to scan DNA until it finds its consensus sequence, where it cleaves and resolves the cruciform DNA. The sequence is that of Crossover junction endodeoxyribonuclease RuvC from Dechloromonas aromatica (strain RCB).